Here is a 1407-residue protein sequence, read N- to C-terminus: DNA-directed RNA polymerase subunit beta' (1407 aa).

Cys70, Cys72, Cys85, and Cys88 together coordinate Zn(2+). Mg(2+) contacts are provided by Asp460, Asp462, and Asp464. Zn(2+) is bound by residues Cys814, Cys888, Cys895, and Cys898. Lys972 carries the post-translational modification N6-acetyllysine.

This sequence belongs to the RNA polymerase beta' chain family. The RNAP catalytic core consists of 2 alpha, 1 beta, 1 beta' and 1 omega subunit. When a sigma factor is associated with the core the holoenzyme is formed, which can initiate transcription. The cofactor is Mg(2+). It depends on Zn(2+) as a cofactor.

The catalysed reaction is RNA(n) + a ribonucleoside 5'-triphosphate = RNA(n+1) + diphosphate. In terms of biological role, DNA-dependent RNA polymerase catalyzes the transcription of DNA into RNA using the four ribonucleoside triphosphates as substrates. The protein is DNA-directed RNA polymerase subunit beta' of Escherichia coli (strain SMS-3-5 / SECEC).